We begin with the raw amino-acid sequence, 238 residues long: Pyridoxine 5'-phosphate synthase (238 aa).

3-amino-2-oxopropyl phosphate-binding residues include Asn-7 and Arg-18. His-43 acts as the Proton acceptor in catalysis. 1-deoxy-D-xylulose 5-phosphate-binding residues include Arg-45 and His-50. Catalysis depends on Glu-70, which acts as the Proton acceptor. 1-deoxy-D-xylulose 5-phosphate is bound at residue Thr-100. His-190 serves as the catalytic Proton donor. Residues Asp-191 and 213–214 contribute to the 3-amino-2-oxopropyl phosphate site; that span reads GH.

It belongs to the PNP synthase family. Homooctamer; tetramer of dimers.

It localises to the cytoplasm. The enzyme catalyses 3-amino-2-oxopropyl phosphate + 1-deoxy-D-xylulose 5-phosphate = pyridoxine 5'-phosphate + phosphate + 2 H2O + H(+). It functions in the pathway cofactor biosynthesis; pyridoxine 5'-phosphate biosynthesis; pyridoxine 5'-phosphate from D-erythrose 4-phosphate: step 5/5. Catalyzes the complicated ring closure reaction between the two acyclic compounds 1-deoxy-D-xylulose-5-phosphate (DXP) and 3-amino-2-oxopropyl phosphate (1-amino-acetone-3-phosphate or AAP) to form pyridoxine 5'-phosphate (PNP) and inorganic phosphate. The protein is Pyridoxine 5'-phosphate synthase of Porphyromonas gingivalis (strain ATCC 33277 / DSM 20709 / CIP 103683 / JCM 12257 / NCTC 11834 / 2561).